A 162-amino-acid polypeptide reads, in one-letter code: Large ribosomal subunit protein uL10 (162 aa).

It belongs to the universal ribosomal protein uL10 family. Part of the ribosomal stalk of the 50S ribosomal subunit. The N-terminus interacts with L11 and the large rRNA to form the base of the stalk. The C-terminus forms an elongated spine to which L12 dimers bind in a sequential fashion forming a multimeric L10(L12)X complex.

Its function is as follows. Forms part of the ribosomal stalk, playing a central role in the interaction of the ribosome with GTP-bound translation factors. The polypeptide is Large ribosomal subunit protein uL10 (Borreliella afzelii (strain PKo) (Borrelia afzelii)).